A 400-amino-acid chain; its full sequence is GDNF family receptor alpha-3 (400 aa).

An N-terminal signal peptide occupies residues 1–31 (MVRPLNPRPLPPVVLMLLLLLPPSPLPLAAG). An intrachain disulfide couples C51 to C57. N-linked (GlcNAc...) asparagine glycosylation is found at N95 and N148. Cystine bridges form between C162–C218, C169–C175, C186–C196, C191–C239, C220–C227, C248–C316, C255–C261, C272–C288, C281–C340, and C318–C328. N309 carries N-linked (GlcNAc...) asparagine glycosylation. A lipid anchor (GPI-anchor amidated asparagine) is attached at N374. Residues 375–400 (PAVRPQPWVPSLFSCTLPLILLLSLW) constitute a propeptide, removed in mature form.

It belongs to the GDNFR family. As to quaternary structure, interacts with ARTN ligand and RET: forms a 2:2:2 ternary complex composed of ARTN ligand, GFRA3 and RET receptor. Interacts with SORL1. In terms of processing, N-glycosylated. In terms of tissue distribution, widely expressed in adult and fetus which exhibit a similar pattern. Essentially not expressed in the central nervous system, but highly expressed in several sensory and sympathetic ganglia of the peripheral nervous system. Moderate expression in many non-neuronal tissues, particularly those of the digestive and urogenital systems, but high expression in stomach and appendix. Several types of glandular tissues show low expression. Very low or no expression detected in the hematopoietic system.

It localises to the cell membrane. Its function is as follows. Receptor for artemin (ARTN), a growth factor that supports the survival of sensory and sympathetic peripheral neurons. ARTN-binding leads to autophosphorylation and activation of the RET receptor. This chain is GDNF family receptor alpha-3 (GFRA3), found in Homo sapiens (Human).